The chain runs to 301 residues: Large ribosomal subunit protein uL18z (301 aa).

This sequence belongs to the universal ribosomal protein uL18 family. As to quaternary structure, component of the large ribosomal subunit (LSU). As to expression, expressed in seedlings, roots, stems, leaves, inflorescences and siliques.

It localises to the cytoplasm. Its subcellular location is the nucleus. The protein resides in the nucleolus. It is found in the nucleoplasm. In terms of biological role, component of the ribosome, a large ribonucleoprotein complex responsible for the synthesis of proteins in the cell. The small ribosomal subunit (SSU) binds messenger RNAs (mRNAs) and translates the encoded message by selecting cognate aminoacyl-transfer RNA (tRNA) molecules. The large subunit (LSU) contains the ribosomal catalytic site termed the peptidyl transferase center (PTC), which catalyzes the formation of peptide bonds, thereby polymerizing the amino acids delivered by tRNAs into a polypeptide chain. The nascent polypeptides leave the ribosome through a tunnel in the LSU and interact with protein factors that function in enzymatic processing, targeting, and the membrane insertion of nascent chains at the exit of the ribosomal tunnel. Seems involved in the regulation of cell proliferation. Essential in leaf polarity establishment, probably having a role for translation in leaf dorsoventral patterning to specify leaf adaxial identity. In Arabidopsis thaliana (Mouse-ear cress), this protein is Large ribosomal subunit protein uL18z.